Reading from the N-terminus, the 263-residue chain is Endonuclease 8 (263 aa).

Catalysis depends on Pro2, which acts as the Schiff-base intermediate with DNA. Glu3 (proton donor) is an active-site residue. Catalysis depends on Lys53, which acts as the Proton donor; for beta-elimination activity. DNA-binding residues include Gln70, Arg125, and Asn169. The FPG-type zinc-finger motif lies at 229–263 (KVFHRDGEVCERCGGIIEKTTLSSRPFYWCPHCQK). Arg253 serves as the catalytic Proton donor; for delta-elimination activity.

Belongs to the FPG family. Requires Zn(2+) as cofactor.

It carries out the reaction 2'-deoxyribonucleotide-(2'-deoxyribose 5'-phosphate)-2'-deoxyribonucleotide-DNA = a 3'-end 2'-deoxyribonucleotide-(2,3-dehydro-2,3-deoxyribose 5'-phosphate)-DNA + a 5'-end 5'-phospho-2'-deoxyribonucleoside-DNA + H(+). Involved in base excision repair of DNA damaged by oxidation or by mutagenic agents. Acts as a DNA glycosylase that recognizes and removes damaged bases. Has a preference for oxidized pyrimidines, such as thymine glycol, 5,6-dihydrouracil and 5,6-dihydrothymine. Has AP (apurinic/apyrimidinic) lyase activity and introduces nicks in the DNA strand. Cleaves the DNA backbone by beta-delta elimination to generate a single-strand break at the site of the removed base with both 3'- and 5'-phosphates. The chain is Endonuclease 8 from Salmonella newport (strain SL254).